The chain runs to 397 residues: Elongation factor Tu (397 aa).

Positions 10 to 206 (KPHVNIGTIG…AVDTAIPEPE (197 aa)) constitute a tr-type G domain. A G1 region spans residues 19–26 (GHIDHGKT). 19-26 (GHIDHGKT) serves as a coordination point for GTP. Mg(2+) is bound at residue Thr26. The tract at residues 62 to 66 (GITIS) is G2. The G3 stretch occupies residues 83-86 (DCPG). Residues 83–87 (DCPGH) and 138–141 (NKAD) contribute to the GTP site. Positions 138–141 (NKAD) are G4. The G5 stretch occupies residues 176–178 (SAL).

It belongs to the TRAFAC class translation factor GTPase superfamily. Classic translation factor GTPase family. EF-Tu/EF-1A subfamily. Monomer.

The protein localises to the cytoplasm. It catalyses the reaction GTP + H2O = GDP + phosphate + H(+). In terms of biological role, GTP hydrolase that promotes the GTP-dependent binding of aminoacyl-tRNA to the A-site of ribosomes during protein biosynthesis. The chain is Elongation factor Tu from Kineococcus radiotolerans (strain ATCC BAA-149 / DSM 14245 / SRS30216).